Here is a 339-residue protein sequence, read N- to C-terminus: Geranylgeranyl transferase type-2 subunit beta (339 aa).

Thr-11 bears the Phosphothreonine mark. PFTB repeat units lie at residues 28–69 (LEKH…DLMG), 76–117 (REEI…TLYD), 124–165 (VDKV…ALLG), 172–213 (VEKA…AITS), 220–261 (SDLL…KIIG), and 268–310 (REKL…SLLG). Residues 198-200 (HAG) and 240-243 (RPEK) contribute to the geranylgeranyl diphosphate site. Positions 246 and 248 each coordinate Zn(2+). Geranylgeranyl diphosphate is bound by residues Tyr-249 and 249-252 (YSWW). His-298 lines the Zn(2+) pocket.

Belongs to the protein prenyltransferase subunit beta family. In terms of assembly, heterotrimer composed of RABGGTA, RABGGTB and CHM; within this trimer, RABGGTA and RABGGTB form the catalytic component B, while CHM (component A) mediates peptide substrate binding. The Rab GGTase dimer (RGGT) interacts with CHM (component A) prior to Rab protein binding; the association is stabilized by geranylgeranyl pyrophosphate (GGpp). The CHM:RGGT:Rab complex is destabilized by GGpp. Interaction of RABGGTB with prenylated PTP4A2 precludes its association with RABGGTA and inhibits enzyme activity. Interacts with CHODL. Interacts with non-phosphorylated form of RAB8A; phosphorylation of RAB8A at 'Thr-72' disrupts this interaction. Zn(2+) is required as a cofactor. Ubiquitous. Detected in all the major organs in adult animals.

It carries out the reaction geranylgeranyl diphosphate + L-cysteinyl-[protein] = S-geranylgeranyl-L-cysteinyl-[protein] + diphosphate. The enzymatic reaction requires the aid of a Rab escort protein (also called component A), such as CHM. Its function is as follows. Catalyzes the transfer of a geranylgeranyl moiety from geranylgeranyl diphosphate to both cysteines of Rab proteins with the C-terminal sequence -XXCC, -XCXC and -CCXX, such as RAB1A, RAB3A, RAB5A and RAB7A. This chain is Geranylgeranyl transferase type-2 subunit beta (Rabggtb), found in Mus musculus (Mouse).